The sequence spans 3595 residues: Replicase polyprotein 1ab (3595 aa).

The segment at 3–23 (CECPRSNLVVMCSGAFCCVLC) adopts a C4-type; atypical zinc-finger fold. A Peptidase C31 domain is found at 56–164 (SGLEGRYCAL…PTTIPFNTTG (109 aa)). Residues Cys-63 and His-130 each act as for Nsp1-alpha papain-like cysteine proteinase activity in the active site. Positions 239–350 (LSFEHGRCWL…LKLPGKTYFG (112 aa)) constitute a Peptidase C32 domain. Catalysis depends on for Nsp1-beta papain-like cysteine proteinase activity residues Cys-246 and His-309. Catalysis depends on for Nsp2 cysteine proteinase activity residues Cys-378 and His-430. The segment at 482–527 (RRGGGKKSGQSSGVRAPGRTTPDLAGDWGKAVDDQEKTASKVTTDK) is disordered. A compositionally biased stretch (basic and acidic residues) spans 511-520 (KAVDDQEKTA). The Peptidase C33 domain occupies 633 to 736 (TFIPPPDGGC…HGWCSSLLSE (104 aa)). The segment at 808-862 (QVRTVDPSQPAAPLPPVPRPRKRKAAAQQVSKVPSEQDPSLAHDPPEKPDSVRPP) is disordered. Basic and acidic residues predominate over residues 851–860 (DPPEKPDSVR). The next 7 helical transmembrane spans lie at 922-942 (MFFL…AGVI), 951-971 (ILCC…AISS), 1019-1039 (VALF…VIGV), 1239-1259 (IFRT…GYWV), 1316-1336 (PYIV…PGII), 1345-1365 (ALLP…IIAA), and 1381-1401 (AFVD…GWIL). The interval 922-1039 (MFFLFLGSPL…MVDVLLVIGV (118 aa)) is HD1. The interval 1239 to 1399 (IFRTALAAAW…VVLTALLVGW (161 aa)) is HD2. The Peptidase S32 domain occupies 1464–1664 (GLLREKTRAS…RLLESSINLE (201 aa)). Residues His-1502, Asp-1527, and Ser-1580 each act as charge relay system; for 3C-like serine proteinase activity in the active site. The next 4 membrane-spanning stretches (helical) occupy residues 1673 to 1693 (IIVA…PFVV), 1711 to 1731 (YNYS…IFFI), 1744 to 1764 (ALIC…IILG), and 1784 to 1804 (AIAI…LELF). An HD3 region spans residues 1687–1804 (LSIPFVVAFF…CVAACCLELF (118 aa)). The 171-residue stretch at 2083 to 2253 (DMNRLRAIIS…YPYKLHPVRG (171 aa)) folds into the NiRAN domain. A RdRp catalytic domain is found at 2491 to 2625 (GRCLETDLAS…LNESDDLPNF (135 aa)). Positions 2746 to 2812 (GKEVQVCSIC…IPILKDRTKF (67 aa)) constitute an AV ZBD domain. Zn(2+) is bound by residues Cys-2752, Cys-2755, Cys-2765, Cys-2770, Cys-2773, His-2777, His-2779, Cys-2782, Cys-2789, His-2791, Cys-2798, and Cys-2801. A (+)RNA virus helicase ATP-binding domain is found at 2862 to 3022 (DLPDGKYSMK…VFELMKKNAL (161 aa)). Residue 2897-2904 (GPPGSGKT) participates in ATP binding. One can recognise a (+)RNA virus helicase C-terminal domain in the interval 3023–3157 (HAIYRFGQNI…DGKARVMLSD (135 aa)). Residues 3196–3292 (SGSLSPLPRV…LTKFLDGRAV (97 aa)) enclose the AV-Nsp11N/CoV-Nsp15M domain. In terms of domain architecture, NendoU spans 3294–3416 (MEDSVYSTGR…MVWRDQTMYF (123 aa)). Active-site residues include His-3325, His-3340, and Lys-3369.

Belongs to the arteriviridae polyprotein family. In terms of processing, specific enzymatic cleavages in vivo by its own proteases yield mature proteins. There are two alternative pathways for processing. Either nsp4-5 is cleaved, which represents the major pathway or the nsp5-6 and nsp6-7 are processed, which represents the minor pathway. The major pathway occurs when nsp2 acts as a cofactor for nsp4.

The protein resides in the host membrane. It localises to the host cytoplasm. Its subcellular location is the host perinuclear region. The catalysed reaction is RNA(n) + a ribonucleoside 5'-triphosphate = RNA(n+1) + diphosphate. The enzyme catalyses ATP + H2O = ADP + phosphate + H(+). It carries out the reaction uridylyl-uridylyl-ribonucleotide-RNA = a 3'-end uridylyl-2',3'-cyclophospho-uridine-RNA + a 5'-end dephospho-ribonucleoside-RNA. In terms of biological role, the replicase polyprotein 1ab is a multifunctional protein: it contains the activities necessary for the transcription of negative stranded RNA, leader RNA, subgenomic mRNAs and progeny virion RNA as well as proteinases responsible for the cleavage of the polyprotein into functional products. Its function is as follows. The Nsp1 chain is essential for viral subgenomic mRNA synthesis. Functionally, the 3C-like serine proteinase chain is responsible for the majority of cleavages as it cleaves the C-terminus of the polyprotein. Plays a role in viral transcription/replication and prevents the simultaneous activation of host cell dsRNA sensors, such as MDA5/IFIH1, OAS, and PKR. Acts by degrading the 5'-polyuridines generated during replication of the poly(A) region of viral genomic and subgenomic RNAs. Catalyzes a two-step reaction in which a 2'3'-cyclic phosphate (2'3'-cP) is first generated by 2'-O transesterification, which is then hydrolyzed to a 3'-phosphate (3'-P). If not degraded, poly(U) RNA would hybridize with poly(A) RNA tails and activate host dsRNA sensors. In terms of biological role, the helicase chain, which contains a zinc finger structure, displays RNA and DNA duplex-unwinding activities with 5' to 3' polarity. This Simian hemorrhagic fever virus (SHFV) protein is Replicase polyprotein 1ab (rep).